A 791-amino-acid polypeptide reads, in one-letter code: DNA repair and recombination protein RAD54-like (791 aa).

Polar residues predominate over residues 1–20; sequence MRRSLAPSQRIGQSTASRNA. The disordered stretch occupies residues 1-53; sequence MRRSLAPSQRIGQSTASRNAFTPPLLQKKNKRACQKDLRLDTDADEDKERKRF. The segment at 2-9 is required for chromatin remodeling, strand pairing activities and coupling of ATPase activity; it reads RRSLAPSQ. A Phosphothreonine modification is found at Thr22. Positions 34–53 are enriched in basic and acidic residues; sequence CQKDLRLDTDADEDKERKRF. Residues 175-349 form the Helicase ATP-binding domain; that stretch reads EGKKGDFNGC…FSLVNFVNPE (175 aa). Residue 188–195 participates in ATP binding; it reads DEMGLGKT. The DEGH box motif lies at 300–303; sequence DEGH. The Helicase C-terminal domain maps to 506 to 663; the sequence is LLDFMLAAIR…NNESSEKHFT (158 aa). The tract at residues 747–791 is disordered; sequence KEVVESPESAAAEAESVEEESQPTQRKRPSPPLSDDSADEDFIGF. Over residues 782–791 the composition is skewed to acidic residues; the sequence is DSADEDFIGF.

It belongs to the SNF2/RAD54 helicase family. As to quaternary structure, interacts (via N-terminus) with spn-A/Rad51.

The protein resides in the nucleus. In terms of biological role, involved in mitotic DNA repair and meiotic recombination. Functions in the recombinational DNA repair pathway. Essential for interhomolog gene conversion (GC), but may have a less important role in intersister GC than spn-A/Rad51. In the presence of DNA, spn-A/Rad51 enhances the ATPase activity of okr/Rad54. This Drosophila ananassae (Fruit fly) protein is DNA repair and recombination protein RAD54-like.